The following is a 689-amino-acid chain: DNA ligase (689 aa).

Residues 35–39 (DEVYD), 84–85 (SL), and Glu122 each bind NAD(+). The active-site N6-AMP-lysine intermediate is the Lys124. NAD(+)-binding residues include Arg145, Glu182, Lys308, and Lys332. The Zn(2+) site is built by Cys426, Cys429, Cys444, and Cys449. The 78-residue stretch at 612 to 689 (TTEKSLNGKR…NETELIQMCR (78 aa)) folds into the BRCT domain.

Belongs to the NAD-dependent DNA ligase family. LigA subfamily. Mg(2+) serves as cofactor. Mn(2+) is required as a cofactor.

It catalyses the reaction NAD(+) + (deoxyribonucleotide)n-3'-hydroxyl + 5'-phospho-(deoxyribonucleotide)m = (deoxyribonucleotide)n+m + AMP + beta-nicotinamide D-nucleotide.. In terms of biological role, DNA ligase that catalyzes the formation of phosphodiester linkages between 5'-phosphoryl and 3'-hydroxyl groups in double-stranded DNA using NAD as a coenzyme and as the energy source for the reaction. It is essential for DNA replication and repair of damaged DNA. In Thermosynechococcus vestitus (strain NIES-2133 / IAM M-273 / BP-1), this protein is DNA ligase.